Reading from the N-terminus, the 744-residue chain is ATP-dependent zinc metalloprotease FtsH (744 aa).

At 1-16 the chain is on the cytoplasmic side; it reads MQDQNNSNTPKKKKLS. The helical transmembrane segment at 17–37 threads the bilayer; sequence FWGIIGIVASILVLLVIAYII. At 38-177 the chain is on the extracellular side; that stretch reads YYYVSQTTVL…ESIWSTVLRY (140 aa). A helical membrane pass occupies residues 178 to 198; sequence GTNIIFLLLFAASFIFMFMSF. Topologically, residues 199 to 744 are cytoplasmic; the sequence is RSQRGTGGLL…EEKSKDEKNN (546 aa). 264–271 is a binding site for ATP; that stretch reads GPPGTGKT. H486 is a Zn(2+) binding site. Residue E487 is part of the active site. Zn(2+)-binding residues include H490 and D564. The tract at residues 722–744 is disordered; sequence IEANKSSSKSTVNEEKSKDEKNN. Residues 733 to 744 are compositionally biased toward basic and acidic residues; sequence VNEEKSKDEKNN.

This sequence in the central section; belongs to the AAA ATPase family. It in the C-terminal section; belongs to the peptidase M41 family. As to quaternary structure, homohexamer. Requires Zn(2+) as cofactor.

It is found in the cell membrane. Functionally, acts as a processive, ATP-dependent zinc metallopeptidase for both cytoplasmic and membrane proteins. Plays a role in the quality control of integral membrane proteins. This is ATP-dependent zinc metalloprotease FtsH from Metamycoplasma arthritidis (strain 158L3-1) (Mycoplasma arthritidis).